The following is a 306-amino-acid chain: Ribosomal RNA small subunit methyltransferase H (306 aa).

Residues 33-35 (GGY), aspartate 51, phenylalanine 82, aspartate 96, and glutamine 103 each bind S-adenosyl-L-methionine.

Belongs to the methyltransferase superfamily. RsmH family.

It is found in the cytoplasm. The catalysed reaction is cytidine(1402) in 16S rRNA + S-adenosyl-L-methionine = N(4)-methylcytidine(1402) in 16S rRNA + S-adenosyl-L-homocysteine + H(+). Functionally, specifically methylates the N4 position of cytidine in position 1402 (C1402) of 16S rRNA. This chain is Ribosomal RNA small subunit methyltransferase H, found in Rickettsia akari (strain Hartford).